Consider the following 583-residue polypeptide: Aspartate--tRNA ligase (583 aa).

E174 is a binding site for L-aspartate. The tract at residues 198-201 is aspartate; that stretch reads QTFK. R220 provides a ligand contact to L-aspartate. ATP is bound by residues 220–222 and Q229; that span reads RDE. H445 lines the L-aspartate pocket. E479 contributes to the ATP binding site. R486 contributes to the L-aspartate binding site. 531–534 serves as a coordination point for ATP; the sequence is GLDR.

The protein belongs to the class-II aminoacyl-tRNA synthetase family. Type 1 subfamily. Homodimer.

The protein localises to the cytoplasm. The enzyme catalyses tRNA(Asp) + L-aspartate + ATP = L-aspartyl-tRNA(Asp) + AMP + diphosphate. Functionally, catalyzes the attachment of L-aspartate to tRNA(Asp) in a two-step reaction: L-aspartate is first activated by ATP to form Asp-AMP and then transferred to the acceptor end of tRNA(Asp). This chain is Aspartate--tRNA ligase, found in Flavobacterium psychrophilum (strain ATCC 49511 / DSM 21280 / CIP 103535 / JIP02/86).